A 148-amino-acid polypeptide reads, in one-letter code: MELNNLKPAIGATKDRKRIGRGTGSGHGKTATKGHKGQKARSGGSIKAGFEGGQMPMQRRLPKRGFTPLMRKDYAIVNIGQLDVFESGSTVDAEALLNAGLISGVKDGIKVLADGDVTKSLVVKVHKYSAKAKEKIEAVGGKIEEITL.

The tract at residues 1-61 (MELNNLKPAI…GGQMPMQRRL (61 aa)) is disordered. Over residues 30 to 39 (TATKGHKGQK) the composition is skewed to basic residues.

This sequence belongs to the universal ribosomal protein uL15 family. In terms of assembly, part of the 50S ribosomal subunit.

Functionally, binds to the 23S rRNA. This is Large ribosomal subunit protein uL15 from Geobacter metallireducens (strain ATCC 53774 / DSM 7210 / GS-15).